The primary structure comprises 191 residues: UPF0312 protein Shewmr7_1249 (191 aa).

An N-terminal signal peptide occupies residues 1-22 (MKKQLLAALIGGFLLAPMAASA).

Belongs to the UPF0312 family. Type 1 subfamily.

It localises to the periplasm. The protein is UPF0312 protein Shewmr7_1249 of Shewanella sp. (strain MR-7).